Here is a 140-residue protein sequence, read N- to C-terminus: CBS domain-containing protein YhcV (140 aa).

CBS domains are found at residues M8–G64 and M72–A127.

The protein is CBS domain-containing protein YhcV (yhcV) of Bacillus subtilis (strain 168).